Consider the following 101-residue polypeptide: Urease subunit beta (101 aa).

It belongs to the urease beta subunit family. Heterotrimer of UreA (gamma), UreB (beta) and UreC (alpha) subunits. Three heterotrimers associate to form the active enzyme.

The protein localises to the cytoplasm. It carries out the reaction urea + 2 H2O + H(+) = hydrogencarbonate + 2 NH4(+). The protein operates within nitrogen metabolism; urea degradation; CO(2) and NH(3) from urea (urease route): step 1/1. The polypeptide is Urease subunit beta (Ectopseudomonas mendocina (strain ymp) (Pseudomonas mendocina)).